A 292-amino-acid chain; its full sequence is Glycine-rich RNA-binding protein RZ1B (292 aa).

The RRM domain occupies 12–90; that stretch reads SRIFVGGLSW…KVISVNKAEP (79 aa). Residue Ser20 is modified to Phosphoserine. The segment at 93–114 is disordered; it reads GGEDVDQLKKGGGYSSRGKGTE. The CCHC-type zinc-finger motif lies at 117–132; the sequence is CFKCRRPGHWARDCPS. Basic and acidic residues-rich tracts occupy residues 180–210 and 220–268; these read DGRRDRDGGRYSYRDRFDSGDKYEPRDHYPF and FVSD…EGRP. The disordered stretch occupies residues 180–292; that stretch reads DGRRDRDGGR…GGRPSSYERW (113 aa).

Expressed in roots, rosette and cauline leaves, stems, floral buds and flowers.

The protein resides in the nucleus. Binds RNA and DNA sequences non-specifically. May be involved in tolerance to cold stress. This Arabidopsis thaliana (Mouse-ear cress) protein is Glycine-rich RNA-binding protein RZ1B.